The primary structure comprises 171 residues: MEIILIKPVRKLGKIGDILKVADGFGRNYLLPQKLAIRATEPNKELIVKQKHEFEAKDKQIREEVEKINALIKEQKLVFIRQTSDDGKLFGSITNKEIADKLSENVSYNIFHSNIILDKKIKSTGIYTVEIRLHAELNAIVTVIVARSESEVQDYLREQKNESLETLAESA.

It belongs to the bacterial ribosomal protein bL9 family.

In terms of biological role, binds to the 23S rRNA. The chain is Large ribosomal subunit protein bL9 from Rickettsia canadensis (strain McKiel).